A 782-amino-acid polypeptide reads, in one-letter code: Isoamylase 3, chloroplastic (782 aa).

The transit peptide at 1 to 68 (MDSIGINRAP…EKVRRFDSVR (68 aa)) directs the protein to the chloroplast. A compositionally biased stretch (polar residues) spans 68–81 (RSTTARAQNGNAGR). Residues 68–88 (RSTTARAQNGNAGRSMTEERG) are disordered. The active-site Nucleophile is Asp-445. Residue Glu-482 is the Proton donor of the active site.

It belongs to the glycosyl hydrolase 13 family. Expressed in leaves. Expressed at low levels in developing endosperm.

The protein localises to the plastid. The protein resides in the chloroplast. Its subcellular location is the amyloplast. The catalysed reaction is Hydrolysis of (1-&gt;6)-alpha-D-glucosidic branch linkages in glycogen, amylopectin and their beta-limit dextrins.. Functionally, starch-debranching enzyme that plays a role in the degradation of transitory starch during the night in leaf blades, facilitates the formation of spherical amyloplasts containing compound granules in the endosperm, and affects morphological characteristics of plastids. This Oryza sativa subsp. japonica (Rice) protein is Isoamylase 3, chloroplastic.